Consider the following 544-residue polypeptide: CTP synthase (544 aa).

An amidoligase domain region spans residues 1–265 (MTRYIFITGG…DTQVLAYFGL (265 aa)). S13 provides a ligand contact to CTP. S13 is a UTP binding site. 14 to 19 (SLGKGL) lines the ATP pocket. Y54 serves as a coordination point for L-glutamine. D71 serves as a coordination point for ATP. D71 and E139 together coordinate Mg(2+). Residues 146-148 (DIE), 186-191 (KTKPTQ), and K222 each bind CTP. UTP contacts are provided by residues 186-191 (KTKPTQ) and K222. V240 contributes to the ATP binding site. Residues 291 to 543 (TIAVVGKYTS…IKAAIEQSRL (253 aa)) enclose the Glutamine amidotransferase type-1 domain. G353 contacts L-glutamine. The active-site Nucleophile; for glutamine hydrolysis is C380. L-glutamine contacts are provided by residues 381–384 (FGMQ), E404, and R472. Active-site residues include H516 and E518.

It belongs to the CTP synthase family. Homotetramer.

It catalyses the reaction UTP + L-glutamine + ATP + H2O = CTP + L-glutamate + ADP + phosphate + 2 H(+). The enzyme catalyses L-glutamine + H2O = L-glutamate + NH4(+). It carries out the reaction UTP + NH4(+) + ATP = CTP + ADP + phosphate + 2 H(+). The protein operates within pyrimidine metabolism; CTP biosynthesis via de novo pathway; CTP from UDP: step 2/2. Its activity is regulated as follows. Allosterically activated by GTP, when glutamine is the substrate; GTP has no effect on the reaction when ammonia is the substrate. The allosteric effector GTP functions by stabilizing the protein conformation that binds the tetrahedral intermediate(s) formed during glutamine hydrolysis. Inhibited by the product CTP, via allosteric rather than competitive inhibition. Its function is as follows. Catalyzes the ATP-dependent amination of UTP to CTP with either L-glutamine or ammonia as the source of nitrogen. Regulates intracellular CTP levels through interactions with the four ribonucleotide triphosphates. The sequence is that of CTP synthase from Azospirillum brasilense.